The following is a 512-amino-acid chain: MSKKPVMLMILDGFGISPNKEGNAVAAANKPNYDRLFNKYPHTELQASGLEVGLPEGQMGNSEVGHLNIGAGRIIYQELTRITKEIKEGTFFTNKALVKAMDEAKENNTSLHLMGLLSNGGVHSHIDHLKGLLELAKKKGLQKVYVHAFMDGRDVAPSSGKDFIVELENAMKEIGVGEIATISGRYYAMDRDNRWERVELAYNAMALGEGEKASSAVEAIEKSYHDNKTDEFVLPTVIEEDGHPVARIKDGDSVIFFNFRPDRAREITRAIVDPEFKGFERKQLHVNFVCMTQYDKTLECVDVAYRPESYTNTLGEYVASKGLNQLRIAETEKYAHVTFFFNGGVEQPNTNEDRALIASPKVATYDLKPEMSAYEVTDELINRLDQDKYDMIILNFANPDMVGHTGVQEAAVKAIEAVDECLGKVADKVLEKEGTLFITADHGNAEVMIDYSTGKPMTAHTSDPVPFLWVSKDAEGKSLKDGGKLADIAPTMLTVMGLEVPSEMTGTCLLNK.

The Mn(2+) site is built by aspartate 12 and serine 62. Serine 62 acts as the Phosphoserine intermediate in catalysis. Residues histidine 123, 153 to 154 (RD), arginine 185, arginine 191, 260 to 263 (RPDR), and lysine 333 each bind substrate. Mn(2+)-binding residues include aspartate 400, histidine 404, aspartate 441, histidine 442, and histidine 460.

This sequence belongs to the BPG-independent phosphoglycerate mutase family. As to quaternary structure, monomer. It depends on Mn(2+) as a cofactor.

It carries out the reaction (2R)-2-phosphoglycerate = (2R)-3-phosphoglycerate. The protein operates within carbohydrate degradation; glycolysis; pyruvate from D-glyceraldehyde 3-phosphate: step 3/5. Functionally, catalyzes the interconversion of 2-phosphoglycerate and 3-phosphoglycerate. This is 2,3-bisphosphoglycerate-independent phosphoglycerate mutase from Clostridium perfringens (strain 13 / Type A).